A 248-amino-acid chain; its full sequence is DNA repair protein RecO (248 aa).

The protein belongs to the RecO family.

In terms of biological role, involved in DNA repair and RecF pathway recombination. The sequence is that of DNA repair protein RecO from Bacillus cereus (strain B4264).